Consider the following 602-residue polypeptide: General amino-acid permease GAP1 (602 aa).

Residues 1–95 are Cytoplasmic-facing; sequence MSNTSSYEKN…LKHHLKNRHL (95 aa). Residue Lys-76 forms a Glycyl lysine isopeptide (Lys-Gly) (interchain with G-Cter in ubiquitin) linkage. The helical transmembrane segment at 96 to 116 threads the bilayer; that stretch reads QMIAIGGAIGTGLLVGSGTAL. At 117 to 121 the chain is on the extracellular side; that stretch reads RTGGP. The helical transmembrane segment at 122–142 threads the bilayer; it reads ASLLIGWGSTGTMIYAMVMAL. The Cytoplasmic portion of the chain corresponds to 143 to 165; the sequence is GELAVIFPISGGFTTYATRFIDE. A helical membrane pass occupies residues 166–185; it reads SFGYANNFNYMLQWLVVLPL. Residues 186–204 are Extracellular-facing; sequence EIVSASITVNFWGTDPKYR. Residues 205–224 form a helical membrane-spanning segment; the sequence is DGFVALFWLAIVIINMFGVK. At 225 to 237 the chain is on the cytoplasmic side; sequence GYGEAEFVFSFIK. A helical membrane pass occupies residues 238–256; it reads VITVVGFIILGIILNCGGG. Over 257–280 the chain is Extracellular; sequence PTGGYIGGKYWHDPGAFAGDTPGA. A helical transmembrane segment spans residues 281–298; sequence KFKGVCSVFVTAAFSFAG. Residues 299-321 are Cytoplasmic-facing; sequence SELVGLAASESVEPRKSVPKAAK. Residues 322 to 342 form a helical membrane-spanning segment; sequence QVFWRITLFYILSLLMIGLLV. Residues 343–376 are Extracellular-facing; that stretch reads PYNDKSLIGASSVDAAASPFVIAIKTHGIKGLPS. Residues 377–396 traverse the membrane as a helical segment; sequence VVNVVILIAVLSVGNSAIYA. The Cytoplasmic portion of the chain corresponds to 397–421; that stretch reads CSRTMVALAEQRFLPEIFSYVDRKG. The helical transmembrane segment at 422 to 442 threads the bilayer; that stretch reads RPLVGIAVTSAFGLIAFVAAS. Over 443–451 the chain is Extracellular; the sequence is KKEGEVFNW. Residues 452 to 472 form a helical membrane-spanning segment; that stretch reads LLALSGLSSLFTWGGICICHI. At 473 to 491 the chain is on the cytoplasmic side; it reads RFRKALAAQGRGLDELSFK. Residues 492–510 form a helical membrane-spanning segment; sequence SPTGVWGSYWGLFMVIIMF. Topologically, residues 511–529 are extracellular; the sequence is IAQFYVAVFPVGDSPSAEG. A helical membrane pass occupies residues 530-548; that stretch reads FFEAYLSFPLVMVMYIGHK. Residues 549-602 are Cytoplasmic-facing; the sequence is IYKRNWKLFIPAEKMDIDTGRREVDLDLLKQEIAEEKAIMATKPRWYRIWNFWC.

This sequence belongs to the amino acid-polyamine-organocation (APC) superfamily. YAT (TC 2.A.3.10) family. In terms of processing, active permease is phosphorylated. The addition of glutamine causes rapid dephosphorylation and inactivation of the permease. Post-translationally, ubiquitination by RSP5 and the RSP5-associated proteins BUL1 and BUL2, leads the addition of poly-ubiquitin chains being specifically formed by linkage through the lysine 63 residue of ubiquitin and mediates ammonium-induced endocytosis and degradation in the vacuole.

Its subcellular location is the cell membrane. The protein localises to the endoplasmic reticulum membrane. Functionally, general amino-acid permease involved in the uptake of all the naturally occurring L-amino-acids, related compounds such as ornithine and citrulline, some D-amino acids, toxic amino acid analogs such as azetidine-2-carboxylate, and the polyamines putrescine and spermidine. Senses its transport substrates to set an appropriate level of transporter activity at the cell surface. Required for FLO11 expression and invasive growth. The chain is General amino-acid permease GAP1 from Saccharomyces cerevisiae (strain ATCC 204508 / S288c) (Baker's yeast).